The primary structure comprises 166 residues: Endoribonuclease YbeY (166 aa).

Histidine 131, histidine 135, and histidine 141 together coordinate Zn(2+).

The protein belongs to the endoribonuclease YbeY family. Requires Zn(2+) as cofactor.

Its subcellular location is the cytoplasm. In terms of biological role, single strand-specific metallo-endoribonuclease involved in late-stage 70S ribosome quality control and in maturation of the 3' terminus of the 16S rRNA. The chain is Endoribonuclease YbeY from Dehalococcoides mccartyi (strain CBDB1).